The primary structure comprises 728 residues: Catalase-peroxidase 1 (728 aa).

An N-terminal signal peptide occupies residues 1–22 (MDKTQSSQGKCPVMHGANSAVA). A cross-link (tryptophyl-tyrosyl-methioninium (Trp-Tyr) (with M-251)) is located at residues 97 to 225 (WHSAGTYRVA…LAAVMMGLIY (129 aa)). H98 functions as the Proton acceptor in the catalytic mechanism. A cross-link (tryptophyl-tyrosyl-methioninium (Tyr-Met) (with W-97)) is located at residues 225-251 (YVNPEGVDGKPDPLRTAQDVRVTFARM). Heme b is bound at residue H266.

This sequence belongs to the peroxidase family. Peroxidase/catalase subfamily. Homodimer or homotetramer. Requires heme b as cofactor. In terms of processing, formation of the three residue Trp-Tyr-Met cross-link is important for the catalase, but not the peroxidase activity of the enzyme.

The enzyme catalyses H2O2 + AH2 = A + 2 H2O. It catalyses the reaction 2 H2O2 = O2 + 2 H2O. Its function is as follows. Bifunctional enzyme with both catalase and broad-spectrum peroxidase activity. In Shewanella sp. (strain MR-4), this protein is Catalase-peroxidase 1.